The chain runs to 345 residues: Phosphoribosylformylglycinamidine cyclo-ligase (345 aa).

This sequence belongs to the AIR synthase family.

Its subcellular location is the cytoplasm. It catalyses the reaction 2-formamido-N(1)-(5-O-phospho-beta-D-ribosyl)acetamidine + ATP = 5-amino-1-(5-phospho-beta-D-ribosyl)imidazole + ADP + phosphate + H(+). It participates in purine metabolism; IMP biosynthesis via de novo pathway; 5-amino-1-(5-phospho-D-ribosyl)imidazole from N(2)-formyl-N(1)-(5-phospho-D-ribosyl)glycinamide: step 2/2. This chain is Phosphoribosylformylglycinamidine cyclo-ligase, found in Shouchella clausii (strain KSM-K16) (Alkalihalobacillus clausii).